The chain runs to 567 residues: Maltase A2 (567 aa).

The first 23 residues, 1–23, serve as a signal peptide directing secretion; the sequence is MPKWAHLGLAALLLISTTQEGTA. N30, N124, and N198 each carry an N-linked (GlcNAc...) asparagine glycan. D226 (nucleophile) is an active-site residue. Catalysis depends on E298, which acts as the Proton donor. N312 is a glycosylation site (N-linked (GlcNAc...) asparagine).

This sequence belongs to the glycosyl hydrolase 13 family.

The enzyme catalyses Hydrolysis of terminal, non-reducing (1-&gt;4)-linked alpha-D-glucose residues with release of alpha-D-glucose.. In Drosophila melanogaster (Fruit fly), this protein is Maltase A2 (Mal-A2).